Here is a 611-residue protein sequence, read N- to C-terminus: Guanylate-binding protein 6 (611 aa).

A GTPase domain (Globular) region spans residues 1 to 308 (MTQPQMAPIC…NAINSGAVPC (308 aa)). The 243-residue stretch at 33–275 (SQPVVVVAIV…FVSYIFTYAK (243 aa)) folds into the GB1/RHD3-type G domain. GTP contacts are provided by residues 43 to 50 (GLYRTGKS), 65 to 67 (LGS), and 95 to 99 (DTEGL).

This sequence belongs to the TRAFAC class dynamin-like GTPase superfamily. GB1/RHD3 GTPase family. GB1 subfamily.

Its subcellular location is the cytoplasmic vesicle. It catalyses the reaction GTP + H2O = GDP + phosphate + H(+). Functionally, interferon (IFN)-inducible GTPase that plays important roles in innate immunity against a diverse range of bacterial, viral and protozoan pathogens, such as bacterial pathogens Listeria monocytogenes and Mycobacterium bovis BCG as well as the protozoan pathogen Toxoplasma gondii. Confers protection to several pathogens, including the bacterial pathogens Listeria monocytogenes and Mycobacterium bovis BCG as well as the protozoan pathogen Toxoplasma gondii. In Mus musculus (Mouse), this protein is Guanylate-binding protein 6 (Gbp6).